The following is a 446-amino-acid chain: Chromosomal replication initiator protein DnaA (446 aa).

A domain I, interacts with DnaA modulators region spans residues 1–81; the sequence is MENISDLWNS…AKLAIRFIIP (81 aa). A domain II region spans residues 81 to 109; it reads PQSQAEEDIDLPPVKPNPAQDDSAHLPQS. Positions 110-326 are domain III, AAA+ region; that stretch reads MLNPKYTFDT…GALIRVVAYS (217 aa). ATP is bound by residues Gly154, Gly156, Lys157, and Thr158. The interval 327-446 is domain IV, binds dsDNA; it reads SLINKDINAD…QVEEINGILK (120 aa).

This sequence belongs to the DnaA family. Oligomerizes as a right-handed, spiral filament on DNA at oriC.

Its subcellular location is the cytoplasm. Its function is as follows. Plays an essential role in the initiation and regulation of chromosomal replication. ATP-DnaA binds to the origin of replication (oriC) to initiate formation of the DNA replication initiation complex once per cell cycle. Binds the DnaA box (a 9 base pair repeat at the origin) and separates the double-stranded (ds)DNA. Forms a right-handed helical filament on oriC DNA; dsDNA binds to the exterior of the filament while single-stranded (ss)DNA is stabiized in the filament's interior. The ATP-DnaA-oriC complex binds and stabilizes one strand of the AT-rich DNA unwinding element (DUE), permitting loading of DNA polymerase. After initiation quickly degrades to an ADP-DnaA complex that is not apt for DNA replication. Binds acidic phospholipids. The polypeptide is Chromosomal replication initiator protein DnaA (Bacillus cereus (strain B4264)).